Reading from the N-terminus, the 451-residue chain is Heme sensor protein HssS (451 aa).

A run of 2 helical transmembrane segments spans residues 9-29 (IAIY…LFTN) and 164-184 (IFLA…VIAS). The region spanning 186–238 (YSIIKPVTALKNATTRIMKGDFSTPIKQTRHDEIGTLQSRFNTMRQNLGQVDQ) is the HAMP domain. Residues 246–451 (NVSHEVKTPL…KTQFIVKLFI (206 aa)) form the Histidine kinase domain. Position 249 is a phosphohistidine; by autocatalysis (His249).

Autophosphorylated.

The protein resides in the cell membrane. The enzyme catalyses ATP + protein L-histidine = ADP + protein N-phospho-L-histidine.. In terms of biological role, member of the two-component regulatory system HssS/HssR involved in intracellular heme homeostasis and tempering of staphylococcal virulence. HssS functions as a heme sensor histidine kinase which is autophosphorylated at a histidine residue and transfers its phosphate group to an aspartate residue of HssR. HssR/HssS activates the expression of HrtAB, an efflux pump, in response to extracellular heme, hemin, hemoglobin or blood. This is Heme sensor protein HssS (hssS) from Staphylococcus epidermidis (strain ATCC 35984 / DSM 28319 / BCRC 17069 / CCUG 31568 / BM 3577 / RP62A).